Reading from the N-terminus, the 441-residue chain is MSKPVVAIVGRPNVGKSTLFNRLAGGLVAIVENRPGVTRDRLYRDSEWLGRKFTIIDTGGIEFVNENTPITAQMRRQAEIAIEEADVIVFVIDAQISPTPDDDMIAQTLRRSGKPVILAANKVENFAKTELYEFYNLGLGEPVPISAVHGMNIGDLLDEVVSHFPEDIEEEVDPDTIRIAVVGRPNVGKSSLVNTLLGEERVIVSNIPGTTRDAIDSAFEHEGKHYIIIDTAGMRRKGRIEELTEQYSVSRSLRAVDRSDVILMLLDAGEGVTEQDKKIAGYAHEAGKGIVLVVNKWDLIEKDDKTMNRFEKDIREELGFMQYAPTLFISAKTGQRVTKLLDLVDFVAEQNSTRVATATLNTLVREWVHLNPPPTDKGRRLKVLYATQVGVKPPTFVFFVNDHELMHFSYRRYLENQLRSSFGFEGSPIRMIVRQKDEERE.

EngA-type G domains lie at Pro4–Ile168 and Ile177–Ser352. Residues Gly10–Ser17, Asp57–Ile61, Asn121–Glu124, Gly183–Ser190, Asp230–Met234, and Asn295–Asp298 contribute to the GTP site. The region spanning Thr353–Asp437 is the KH-like domain.

The protein belongs to the TRAFAC class TrmE-Era-EngA-EngB-Septin-like GTPase superfamily. EngA (Der) GTPase family. In terms of assembly, associates with the 50S ribosomal subunit.

Its function is as follows. GTPase that plays an essential role in the late steps of ribosome biogenesis. This is GTPase Der from Desulfitobacterium hafniense (strain Y51).